The chain runs to 403 residues: Acetate kinase (403 aa).

N7 serves as a coordination point for Mg(2+). K14 serves as a coordination point for ATP. R90 is a binding site for substrate. Residue D147 is the Proton donor/acceptor of the active site. ATP-binding positions include 207 to 211 (HIGNG), 283 to 285 (DMR), and 331 to 335 (GVGEN). E386 contacts Mg(2+).

It belongs to the acetokinase family. As to quaternary structure, homodimer. The cofactor is Mg(2+). It depends on Mn(2+) as a cofactor.

It localises to the cytoplasm. It catalyses the reaction acetate + ATP = acetyl phosphate + ADP. It participates in metabolic intermediate biosynthesis; acetyl-CoA biosynthesis; acetyl-CoA from acetate: step 1/2. Functionally, catalyzes the formation of acetyl phosphate from acetate and ATP. Can also catalyze the reverse reaction. This is Acetate kinase from Thermotoga petrophila (strain ATCC BAA-488 / DSM 13995 / JCM 10881 / RKU-1).